The chain runs to 219 residues: Probable nicotinate-nucleotide adenylyltransferase (219 aa).

This sequence belongs to the NadD family.

The enzyme catalyses nicotinate beta-D-ribonucleotide + ATP + H(+) = deamido-NAD(+) + diphosphate. It participates in cofactor biosynthesis; NAD(+) biosynthesis; deamido-NAD(+) from nicotinate D-ribonucleotide: step 1/1. Its function is as follows. Catalyzes the reversible adenylation of nicotinate mononucleotide (NaMN) to nicotinic acid adenine dinucleotide (NaAD). The chain is Probable nicotinate-nucleotide adenylyltransferase from Enterococcus faecalis (strain ATCC 700802 / V583).